A 921-amino-acid chain; its full sequence is Probable dipeptidyl-aminopeptidase B (921 aa).

The interval 1-87 (MDAPATASRQ…EADTNDLETG (87 aa)) is disordered. At 1-108 (MDAPATASRQ…RVGVDRGLKK (108 aa)) the chain is on the cytoplasmic side. Positions 22–33 (SSLSTVSTTSLV) are enriched in low complexity. A compositionally biased stretch (basic and acidic residues) spans 35 to 45 (DRLHEHNEKSY). Over residues 66 to 75 (PDDDDDDDES) the composition is skewed to acidic residues. A helical; Signal-anchor for type II membrane protein membrane pass occupies residues 109–129 (VILILAAAFLFAWGAALFVFL). At 130 to 921 (SNKSYKHAST…KPIVEPKARV (792 aa)) the chain is on the vacuolar side. N-linked (GlcNAc...) asparagine glycans are attached at residues N131, N364, and N577. S768 serves as the catalytic Charge relay system. An N-linked (GlcNAc...) asparagine glycan is attached at N827. Active-site charge relay system residues include D845 and H878.

This sequence belongs to the peptidase S9B family.

Its subcellular location is the vacuole membrane. It carries out the reaction Release of an N-terminal dipeptide, Xaa-Yaa-|-Zaa-, from a polypeptide, preferentially when Yaa is Pro, provided Zaa is neither Pro nor hydroxyproline.. In terms of biological role, type IV dipeptidyl-peptidase which removes N-terminal dipeptides sequentially from polypeptides having unsubstituted N-termini provided that the penultimate residue is proline. The protein is Probable dipeptidyl-aminopeptidase B (DAPB) of Colletotrichum graminicola (strain M1.001 / M2 / FGSC 10212) (Maize anthracnose fungus).